We begin with the raw amino-acid sequence, 133 residues long: Small ribosomal subunit protein uS8 (133 aa).

Belongs to the universal ribosomal protein uS8 family. Part of the 30S ribosomal subunit. Contacts proteins S5 and S12.

Functionally, one of the primary rRNA binding proteins, it binds directly to 16S rRNA central domain where it helps coordinate assembly of the platform of the 30S subunit. This chain is Small ribosomal subunit protein uS8, found in Gloeobacter violaceus (strain ATCC 29082 / PCC 7421).